Here is a 120-residue protein sequence, read N- to C-terminus: Large ribosomal subunit protein bL20 (120 aa).

It belongs to the bacterial ribosomal protein bL20 family.

Its function is as follows. Binds directly to 23S ribosomal RNA and is necessary for the in vitro assembly process of the 50S ribosomal subunit. It is not involved in the protein synthesizing functions of that subunit. In Novosphingobium aromaticivorans (strain ATCC 700278 / DSM 12444 / CCUG 56034 / CIP 105152 / NBRC 16084 / F199), this protein is Large ribosomal subunit protein bL20.